The following is a 228-amino-acid chain: 2-C-methyl-D-erythritol 4-phosphate cytidylyltransferase (228 aa).

This sequence belongs to the IspD/TarI cytidylyltransferase family. IspD subfamily.

It catalyses the reaction 2-C-methyl-D-erythritol 4-phosphate + CTP + H(+) = 4-CDP-2-C-methyl-D-erythritol + diphosphate. Its pathway is isoprenoid biosynthesis; isopentenyl diphosphate biosynthesis via DXP pathway; isopentenyl diphosphate from 1-deoxy-D-xylulose 5-phosphate: step 2/6. Functionally, catalyzes the formation of 4-diphosphocytidyl-2-C-methyl-D-erythritol from CTP and 2-C-methyl-D-erythritol 4-phosphate (MEP). This Dechloromonas aromatica (strain RCB) protein is 2-C-methyl-D-erythritol 4-phosphate cytidylyltransferase.